We begin with the raw amino-acid sequence, 235 residues long: 15,16-dihydrobiliverdin:ferredoxin oxidoreductase (235 aa).

Belongs to the HY2 family.

It catalyses the reaction 15,16-dihydrobiliverdin + oxidized 2[4Fe-4S]-[ferredoxin] = biliverdin IXalpha + reduced 2[4Fe-4S]-[ferredoxin] + 2 H(+). In terms of biological role, catalyzes the two-electron reduction of biliverdin IX-alpha at the C15 methine bridge. The chain is 15,16-dihydrobiliverdin:ferredoxin oxidoreductase from Synechococcus sp. (strain CC9902).